Here is a 109-residue protein sequence, read N- to C-terminus: Insulin (109 aa).

Residues 1–24 form the signal peptide; the sequence is MAPWMHLLTVLALLALWGPNSVQA. Intrachain disulfides connect C31-C93, C43-C106, and C92-C97. A propeptide spans 56-84 (c peptide); it reads ELEDLQVEQAELGLEAGGLQPSALEMILQ.

Belongs to the insulin family. Heterodimer of a B chain and an A chain linked by two disulfide bonds.

The protein resides in the secreted. Its function is as follows. Insulin decreases blood glucose concentration. It increases cell permeability to monosaccharides, amino acids and fatty acids. It accelerates glycolysis, the pentose phosphate cycle, and glycogen synthesis in liver. This is Insulin (INS) from Octodon degus (Degu).